A 693-amino-acid polypeptide reads, in one-letter code: Translation initiation factor IF-2 (693 aa).

The tr-type G domain maps to 181 to 349; it reads PRPPVVTVMG…MILLVAEMNE (169 aa). A G1 region spans residues 190 to 197; it reads GHVDHGKT. 190 to 197 provides a ligand contact to GTP; that stretch reads GHVDHGKT. The G2 stretch occupies residues 215 to 219; sequence GITQS. The tract at residues 236–239 is G3; the sequence is DTPG. Residues 236 to 240 and 290 to 293 contribute to the GTP site; these read DTPGH and NKID. The segment at 290–293 is G4; sequence NKID. Positions 327–329 are G5; that stretch reads SAR.

Belongs to the TRAFAC class translation factor GTPase superfamily. Classic translation factor GTPase family. IF-2 subfamily.

The protein localises to the cytoplasm. One of the essential components for the initiation of protein synthesis. Protects formylmethionyl-tRNA from spontaneous hydrolysis and promotes its binding to the 30S ribosomal subunits. Also involved in the hydrolysis of GTP during the formation of the 70S ribosomal complex. In Thermotoga petrophila (strain ATCC BAA-488 / DSM 13995 / JCM 10881 / RKU-1), this protein is Translation initiation factor IF-2.